Here is a 520-residue protein sequence, read N- to C-terminus: UvrABC system protein C (520 aa).

Positions Glu-11–Ile-89 constitute a GIY-YIG domain. The UVR domain maps to Gln-195 to Leu-230.

The protein belongs to the UvrC family. Interacts with UvrB in an incision complex.

The protein resides in the cytoplasm. The UvrABC repair system catalyzes the recognition and processing of DNA lesions. UvrC both incises the 5' and 3' sides of the lesion. The N-terminal half is responsible for the 3' incision and the C-terminal half is responsible for the 5' incision. This Methanospirillum hungatei JF-1 (strain ATCC 27890 / DSM 864 / NBRC 100397 / JF-1) protein is UvrABC system protein C.